We begin with the raw amino-acid sequence, 86 residues long: U2-sicaritoxin-Li1b (86 aa).

Positions 1–20 (MKIELFLVVIFALAIHMATA) are cleaved as a signal peptide. A propeptide spanning residues 21-33 (EEVIESDIEPAER) is cleaved from the precursor. 4 disulfides stabilise this stretch: C35/C53, C42/C62, C52/C71, and C64/C69. A Lysine amide modification is found at K85.

The protein belongs to the neurotoxin 39 family. In terms of tissue distribution, expressed by the venom gland.

It is found in the secreted. Toxin active against S.frugiperda larvae. May act on sodium channels (Nav). The protein is U2-sicaritoxin-Li1b of Loxosceles intermedia (Brown spider).